The chain runs to 354 residues: Selenide, water dikinase (354 aa).

Cys23 is an active-site residue. ATP-binding positions include Lys26 and Thr54–Asp56. Residue Asp57 coordinates Mg(2+). Residues Asp74, Asp97, and Gly145–Ser147 contribute to the ATP site. Asp97 serves as a coordination point for Mg(2+). Asp233 lines the Mg(2+) pocket.

This sequence belongs to the selenophosphate synthase 1 family. Class I subfamily. As to quaternary structure, homodimer. Requires Mg(2+) as cofactor.

It carries out the reaction hydrogenselenide + ATP + H2O = selenophosphate + AMP + phosphate + 2 H(+). In terms of biological role, synthesizes selenophosphate from selenide and ATP. The sequence is that of Selenide, water dikinase from Paraburkholderia xenovorans (strain LB400).